The primary structure comprises 224 residues: Cytidylate kinase (224 aa).

An ATP-binding site is contributed by 11-19 (GPASAGKST).

Belongs to the cytidylate kinase family. Type 1 subfamily.

The protein localises to the cytoplasm. It catalyses the reaction CMP + ATP = CDP + ADP. The catalysed reaction is dCMP + ATP = dCDP + ADP. The protein is Cytidylate kinase of Ligilactobacillus salivarius (strain UCC118) (Lactobacillus salivarius).